The chain runs to 7785 residues: Probable non-canonical nonribosomal peptide synthetase (NRPS) CymA (7785 aa).

3 Carrier domains span residues 487–562 (TARS…QRQE), 1908–1983 (HART…SEQQ), and 2958–3033 (SPGM…LEGG). O-(pantetheine 4'-phosphoryl)serine occurs at positions 522, 1943, and 2993. Residues 3088–3111 (RLALADVVVRHEALRTVFAERAGN) form an LRR 1 repeat. 3 Carrier domains span residues 3978-4053 (APRT…SEQQ), 5002-5077 (EPRT…LEAN), and 6389-6464 (GPRD…AQGS). 3 positions are modified to O-(pantetheine 4'-phosphoryl)serine: S4013, S5037, and S6424. The LRR 2 repeat unit spans residues 6853-6875 (TGVSRVDLSVNAIETFDDHGLPA). The Carrier 7 domain maps to 7432–7507 (GPRTPQEEIL…QLAEQLGSDG (76 aa)). S7467 bears the O-(pantetheine 4'-phosphoryl)serine mark.

Pantetheine 4'-phosphate is required as a cofactor.

In terms of biological role, probable non-canonical nonribosomal peptide synthetase (NRPS); part of the gene cluster that mediates the biosynthesis of cyclic heptapeptides, known as cyclomarins and also of cyclic dipeptides, called cyclomarazines, which have both antimicrobial and cytotoxic effects. First, CymD catalyzes the reverse N-prenylation of monomeric L-tryptophan with dimethylallyl diphosphate (DMAPP) to form N-(1,1-dimethylallyl)-tryptophan (r-N-DMAT). The N-(1,1-dimethylallyl)-tryptophan produced by CymD is then combined with a range of standard and nonproteinogenic amino acid substrates to synthesize the peptides, a process that is probably catalyzed by the non-canonical nonribosomal peptide synthetase (NRPS), CymA. Other proteins in the cluster catalyze further modifications of the peptides including CymV which catalyzes the oxidation of olefinic cyclomarins and cyclomarazines to their respective epoxide derivatives. In Salinispora arenicola (strain CNS-205), this protein is Probable non-canonical nonribosomal peptide synthetase (NRPS) CymA.